A 320-amino-acid chain; its full sequence is 3-O-acetylpapaveroxine carboxylesterase CXE1 (320 aa).

An Involved in the stabilization of the negatively charged intermediate by the formation of the oxyanion hole motif is present at residues 72 to 74; the sequence is HGG. Active-site residues include Ser-158, Asp-262, and His-292.

It belongs to the 'GDXG' lipolytic enzyme family.

It catalyses the reaction 3-O-acetylpapaveroxine + H2O = narcotine hemiacetal + acetate + H(+). The protein operates within alkaloid biosynthesis. In terms of biological role, carboxylesterase involved in the biosynthesis of the benzylisoquinoline alkaloid noscapine. Converts 3-O-acetylpapaveroxine to papaveroxine which spontaneously rearranges to narcotine hemiacetal. In Papaver somniferum (Opium poppy), this protein is 3-O-acetylpapaveroxine carboxylesterase CXE1.